The following is a 553-amino-acid chain: Phosphoenolpyruvate carboxykinase (ATP) (553 aa).

The tract at residues 1-22 is disordered; the sequence is MAPPTAVGSSINFEGHPTIKST. ATP is bound at residue 255-262; that stretch reads GLSGTGKT.

The protein belongs to the phosphoenolpyruvate carboxykinase (ATP) family.

The catalysed reaction is oxaloacetate + ATP = phosphoenolpyruvate + ADP + CO2. Its pathway is carbohydrate biosynthesis; gluconeogenesis. This chain is Phosphoenolpyruvate carboxykinase (ATP) (PCK1), found in Candida albicans (Yeast).